We begin with the raw amino-acid sequence, 218 residues long: Large ribosomal subunit protein bL25 (218 aa).

Disordered stretches follow at residues 1-20 and 185-218; these read MKTHELKASPRTTRGNGPAR and PTAAALPEEGEEGEEGEEGGEGGEAEGAEAASEE. Acidic residues predominate over residues 192 to 218; it reads EEGEEGEEGEEGGEGGEAEGAEAASEE.

This sequence belongs to the bacterial ribosomal protein bL25 family. CTC subfamily. In terms of assembly, part of the 50S ribosomal subunit; part of the 5S rRNA/L5/L18/L25 subcomplex. Contacts the 5S rRNA. Binds to the 5S rRNA independently of L5 and L18.

In terms of biological role, this is one of the proteins that binds to the 5S RNA in the ribosome where it forms part of the central protuberance. This Desulfatibacillum aliphaticivorans protein is Large ribosomal subunit protein bL25.